The primary structure comprises 200 residues: Lipopolysaccharide core heptose(II)-phosphate phosphatase (200 aa).

Positions 1-25 (MLAFCRSSLKSKKYFIILLALAAIA) are cleaved as a signal peptide.

Belongs to the phosphoglycerate mutase family. Ais subfamily.

The protein resides in the periplasm. The protein operates within bacterial outer membrane biogenesis; lipopolysaccharide metabolism. In terms of biological role, catalyzes the dephosphorylation of heptose(II) of the outer membrane lipopolysaccharide core. The sequence is that of Lipopolysaccharide core heptose(II)-phosphate phosphatase from Escherichia coli O6:H1 (strain CFT073 / ATCC 700928 / UPEC).